Consider the following 205-residue polypeptide: Thymidylate kinase (205 aa).

10–17 (GIDGAGKS) contributes to the ATP binding site.

The protein belongs to the thymidylate kinase family.

It catalyses the reaction dTMP + ATP = dTDP + ADP. Phosphorylation of dTMP to form dTDP in both de novo and salvage pathways of dTTP synthesis. The chain is Thymidylate kinase from Ralstonia nicotianae (strain ATCC BAA-1114 / GMI1000) (Ralstonia solanacearum).